Reading from the N-terminus, the 256-residue chain is 5'-nucleotidase SurE (256 aa).

A divalent metal cation is bound by residues D8, D9, S40, and N92.

This sequence belongs to the SurE nucleotidase family. A divalent metal cation serves as cofactor.

It is found in the cytoplasm. It catalyses the reaction a ribonucleoside 5'-phosphate + H2O = a ribonucleoside + phosphate. Functionally, nucleotidase that shows phosphatase activity on nucleoside 5'-monophosphates. The sequence is that of 5'-nucleotidase SurE from Rhizobium meliloti (strain 1021) (Ensifer meliloti).